We begin with the raw amino-acid sequence, 246 residues long: Bis(5'-nucleosyl)-tetraphosphatase PrpE [asymmetrical] (246 aa).

Belongs to the PrpE family. It depends on Ni(2+) as a cofactor.

It catalyses the reaction P(1),P(4)-bis(5'-guanosyl) tetraphosphate + H2O = GMP + GTP + 2 H(+). Its function is as follows. Asymmetrically hydrolyzes Ap4p to yield AMP and ATP. This is Bis(5'-nucleosyl)-tetraphosphatase PrpE [asymmetrical] from Bacillus mycoides (strain KBAB4) (Bacillus weihenstephanensis).